Consider the following 238-residue polypeptide: Purine nucleoside phosphorylase DeoD-type (238 aa).

Histidine 4 lines the a purine D-ribonucleoside pocket. Residues glycine 20, arginine 24, arginine 43, and 87-90 (RVGS) contribute to the phosphate site. A purine D-ribonucleoside is bound by residues 179–181 (EME) and 203–204 (SD). Aspartate 204 (proton donor) is an active-site residue.

The protein belongs to the PNP/UDP phosphorylase family. Homohexamer; trimer of homodimers.

The enzyme catalyses a purine D-ribonucleoside + phosphate = a purine nucleobase + alpha-D-ribose 1-phosphate. It catalyses the reaction a purine 2'-deoxy-D-ribonucleoside + phosphate = a purine nucleobase + 2-deoxy-alpha-D-ribose 1-phosphate. Catalyzes the reversible phosphorolytic breakdown of the N-glycosidic bond in the beta-(deoxy)ribonucleoside molecules, with the formation of the corresponding free purine bases and pentose-1-phosphate. This Haemophilus influenzae (strain 86-028NP) protein is Purine nucleoside phosphorylase DeoD-type.